Reading from the N-terminus, the 829-residue chain is Sodium/hydrogen exchanger 3 (829 aa).

The first 26 residues, 1–26, serve as a signal peptide directing secretion; it reads MWHRALGPGWKLLLALALTSLQGARG. At 27–46 the chain is on the extracellular side; that stretch reads AEEEPSSDGSFQVVTFKWHH. A helical transmembrane segment spans residues 47-69; that stretch reads VQDPYIIALWILVASLAKIVFHL. The Cytoplasmic portion of the chain corresponds to 70 to 77; it reads SHKVTSIV. Residues 78–97 form a helical membrane-spanning segment; sequence PESALLIVLGLVLGGIVWAA. The Extracellular segment spans residues 98–106; sequence DHIASFTLT. A helical membrane pass occupies residues 107-124; sequence PTLFFFYLLPPIVLDAGY. Topologically, residues 125 to 127 are cytoplasmic; that stretch reads FMP. Residues 128–163 form a helical membrane-spanning segment; the sequence is NRLFFGNLGTILLYAVIGTIWNAATTGLSLYGVFLS. Residues Gly133, Gly136, and Thr137 each contribute to the a 1,2-diacyl-sn-glycero-3-phospho-(1D-myo-inositol) site. At 164–176 the chain is on the extracellular side; it reads GLMGELKIGLLDF. A helical membrane pass occupies residues 177-198; it reads LLFGSLIAAVDPVAVLAVFEEV. At 199–200 the chain is on the cytoplasmic side; that stretch reads HV. A helical membrane pass occupies residues 201-232; that stretch reads NEVLFIIVFGESLLNDAVTVVLYNVFESFVTL. Over 233–239 the chain is Extracellular; the sequence is GGDAVTG. A helical transmembrane segment spans residues 240-274; that stretch reads VDCVKGIVSFFVVSLGGTLVGVIFAFLLSLVTRFT. Over 275 to 276 the chain is Cytoplasmic; the sequence is KH. Residues 277–299 form a helical membrane-spanning segment; the sequence is VRIIEPGFVFVISYLSYLTSEML. Topologically, residues 300 to 301 are extracellular; sequence SL. A helical membrane pass occupies residues 302 to 318; that stretch reads SSILAITFCGICCQKYV. Topologically, residues 319 to 325 are cytoplasmic; that stretch reads KANISEQ. A helical transmembrane segment spans residues 326–354; that stretch reads SATTVRYTMKMLASGAETIIFMFLGISAV. Residues 355 to 362 are Extracellular-facing; sequence NPDIWTWN. Residues 363–384 traverse the membrane as a helical segment; that stretch reads TAFVLLTLVFISVYRAIGVVLQ. Residues 385–397 are Cytoplasmic-facing; that stretch reads TWILNRYRMVQLE. Residue Met393 participates in a 1,2-diacyl-sn-glycero-3-phospho-(1D-myo-inositol) binding. The helical transmembrane segment at 398–421 threads the bilayer; it reads TIDQVVMSYGGLRGAVAYALVVLL. The Extracellular portion of the chain corresponds to 422–428; the sequence is DEKKVKE. The helical transmembrane segment at 429–462 threads the bilayer; the sequence is KNLFVSTTLIVVFFTVIFQGLTIKPLVQWLKVKR. Residues 463 to 829 lie on the Cytoplasmic side of the membrane; it reads SEHREPKLNE…QPAAPESTHM (367 aa). A 1,2-diacyl-sn-glycero-3-phospho-(1D-myo-inositol) contacts are provided by Gln492, Ile493, and His495. Residues Ser550 and Ser558 each carry the phosphoserine modification. An interaction with EZR region spans residues 571 to 585; sequence RPSTVEASVSYFLRE. Residues 586 to 663 form an interaction with NHERF4 region; the sequence is NVSAVCLDMQ…RKRLESFKSA (78 aa). An interaction with AHCYL1 region spans residues 587–691; that stretch reads VSAVCLDMQS…AQKRRNSSIP (105 aa). A phosphoserine mark is found at Ser588 and Ser603. Ser659 carries the post-translational modification Phosphoserine; by SGK1. A compositionally biased stretch (basic residues) spans 677 to 687; that stretch reads YKRERAQKRRN. Residues 677-696 are disordered; sequence YKRERAQKRRNSSIPNGKLP. Phosphoserine occurs at positions 714, 805, and 808.

This sequence belongs to the monovalent cation:proton antiporter 1 (CPA1) transporter (TC 2.A.36) family. Homodimer. Found in the forms of complex and dynamic macromolecular complexes. Binds NHERF1 and NHERF2. Interacts with CHP1; this interaction increases trafficking and activity of SLC9A3 at the plasma membrane. Interacts with CHP2 and SHANK2. Interacts with PDZK1 (via C-terminal PDZ domain). Interacts with NHERF4 and interactions decrease in response to elevated calcium ion levels. Interacts with AHCYL1; the interaction is required for SLC9A3 activity. Interacts with EZR; interaction targets SLC9A3 to the apical membrane. Interacts with SNX27 (via PDZ domains); directs SLC9A3 membrane insertion from early endosomes to the plasma membrane. Phosphorylated by PKA, which inhibits activity. Phosphorylation at Ser-659 by SGK1 is associated with increased abundance at the cell membrane. Phosphorylation at Ser-714 by CSNK2A1 regulates SLC9A3 activity through the formation of multiple signaling complexes.

The protein localises to the apical cell membrane. It is found in the cell membrane. The protein resides in the recycling endosome membrane. It localises to the early endosome membrane. It catalyses the reaction Na(+)(in) + H(+)(out) = Na(+)(out) + H(+)(in). With respect to regulation, seems to switch between active and inactive modes in response to various stimuli. Activated directly or indirectly by membrane phosphatidylinositol (PIs). Regulated by a variety of auxiliary proteins, which facilitate the maturation, cell surface expression and function of the transporter. Inhibited specifically by the drug tenapanor. Its function is as follows. Plasma membrane Na(+)/H(+) antiporter. Exchanges intracellular H(+) ions for extracellular Na(+) in 1:1 stoichiometry, playing a key role in salt and fluid absorption and pH homeostasis. Major apical Na(+)/H(+) exchanger in kidney and intestine playing an important role in renal and intestine Na(+) absorption and blood pressure regulation. The sequence is that of Sodium/hydrogen exchanger 3 from Mus musculus (Mouse).